Consider the following 172-residue polypeptide: Large ribosomal subunit protein uL10 (172 aa).

The protein belongs to the universal ribosomal protein uL10 family. Part of the ribosomal stalk of the 50S ribosomal subunit. The N-terminus interacts with L11 and the large rRNA to form the base of the stalk. The C-terminus forms an elongated spine to which L12 dimers bind in a sequential fashion forming a multimeric L10(L12)X complex.

Forms part of the ribosomal stalk, playing a central role in the interaction of the ribosome with GTP-bound translation factors. The protein is Large ribosomal subunit protein uL10 of Chlorobium luteolum (strain DSM 273 / BCRC 81028 / 2530) (Pelodictyon luteolum).